Reading from the N-terminus, the 610-residue chain is Diol dehydratase-reactivating factor large subunit (610 aa).

11 to 13 (NSS) lines the ATP pocket. The Mg(2+) site is built by threonine 105, aspartate 166, and aspartate 183. ATP-binding positions include 459–462 (EEIK), 557–558 (GS), and arginine 591.

It belongs to the DdrA/PduG family. As to quaternary structure, component of the DDR complex, a heterotetramer of DdrA(2)/DdrB(2). The DDR complex interacts with the diol dehydratase complex in the presence of ADP but not ATP. The cofactor is Mg(2+).

The catalysed reaction is ATP + H2O = ADP + phosphate + H(+). Its function is as follows. Large subunit of the diol dehydratase-reactivating factor (DDR), which reactivates suicidally inhibited adenosylcobalamin-dependent diol dehydratase (DD, pddA, pddB, pddC). DDR acts as a chaperone, reactivating inactivated DD holoenzyme in the presence of ATP, Mg(2+) and free adenosylcobalamin (AdoCbl), by mediating the exchange of the tightly bound damaged cofactor AdoCbl for a free intact one. Reactivation takes place in two steps: ADP-dependent cobalamin release, then ATP-dependent dissociation of the DD apoenzyme-DDR complex. DDR has weak ATPase activity which is required for DD reactivation. This subunit contains the adenosine nucleotide binding site. Activates glycerol-inactivated, O2-inactivated holoenzyme and inactivated enzyme-cyanocobalamin complex. Also reactivates glycerol-inactivated hologlycerol dehydratase, a DD isozyme. In Klebsiella michiganensis (strain ATCC 8724 / DSM 4798 / JCM 20051 / NBRC 3318 / NRRL B-199 / KCTC 1686 / BUCSAV 143 / CCM 1901), this protein is Diol dehydratase-reactivating factor large subunit.